A 132-amino-acid polypeptide reads, in one-letter code: Small ribosomal subunit protein uS8 (132 aa).

This sequence belongs to the universal ribosomal protein uS8 family. Part of the 30S ribosomal subunit. Contacts proteins S5 and S12.

Functionally, one of the primary rRNA binding proteins, it binds directly to 16S rRNA central domain where it helps coordinate assembly of the platform of the 30S subunit. This chain is Small ribosomal subunit protein uS8, found in Streptomyces avermitilis (strain ATCC 31267 / DSM 46492 / JCM 5070 / NBRC 14893 / NCIMB 12804 / NRRL 8165 / MA-4680).